The following is a 327-amino-acid chain: Gamma-resorcylate decarboxylase (327 aa).

Glu-8 and His-10 together coordinate Zn(2+). 2,6-dihydroxybenzoate is bound by residues Phe-23, His-164, and Asp-287. Zn(2+)-binding residues include His-164 and Asp-287. Residue Asp-287 is part of the active site.

Belongs to the metallo-dependent hydrolases superfamily. ACMSD family. In terms of assembly, homotetramer. Dimer of dimers. Zn(2+) is required as a cofactor.

The catalysed reaction is 2,6-dihydroxybenzoate + H(+) = resorcinol + CO2. It carries out the reaction 2,3-dihydroxybenzoate + H(+) = catechol + CO2. The protein operates within aromatic compound metabolism. Its activity is regulated as follows. Inhibited by CuCl(2), monoiodoacetate and diethylpyrocarbonate. Inhibited by 2,3-dihydroxybenzaldehyde, which is an analog of the substrate 2,3-dihydroxybenzoate. Involved in the gamma-resorcylate (2,6-dihydroxybenzoate) catabolism. Catalyzes the reversible decarboxylation of gamma-resorcylate to resorcinol. The reaction is reversible, but equilibrium greatly favors the decarboxylation reaction. Also catalyzes the decarboxylation of 2,3-dihydroxybenzoate to catechol, but does not act on 2,4-dihydroxybenzoate, 2,5-dihydroxybenzoate, 3,4-dihydroxybenzoate, 3,5-dihydroxybenzoate, 2-hydroxybenzoate, or 3-hydroxybenzoate. Only resorcinol is carboxylated by the reverse reaction. The sequence is that of Gamma-resorcylate decarboxylase from Rhizobium sp. (strain MTP-10005).